Consider the following 161-residue polypeptide: Putative pre-16S rRNA nuclease (161 aa).

This sequence belongs to the YqgF nuclease family.

It localises to the cytoplasm. Could be a nuclease involved in processing of the 5'-end of pre-16S rRNA. This is Putative pre-16S rRNA nuclease from Rhodospirillum rubrum (strain ATCC 11170 / ATH 1.1.1 / DSM 467 / LMG 4362 / NCIMB 8255 / S1).